We begin with the raw amino-acid sequence, 138 residues long: MWKDLPQNVPRIPRIQVPAAAADNSLLKDLNQGQRCYLYSIMRIYDSRPQWKALQTRYIHSLGYQQHLGYITQQEALSCAAVLRHSTMRASATVAPQRTILPRVFSHAKKGQPAKPGFRVGSRASLHSMLSTKTLDKA.

The protein belongs to the FAM216 family.

The protein is Protein FAM216B (Fam216b) of Mus musculus (Mouse).